An 82-amino-acid polypeptide reads, in one-letter code: Exodeoxyribonuclease 7 small subunit (82 aa).

The protein belongs to the XseB family. As to quaternary structure, heterooligomer composed of large and small subunits.

The protein localises to the cytoplasm. It catalyses the reaction Exonucleolytic cleavage in either 5'- to 3'- or 3'- to 5'-direction to yield nucleoside 5'-phosphates.. In terms of biological role, bidirectionally degrades single-stranded DNA into large acid-insoluble oligonucleotides, which are then degraded further into small acid-soluble oligonucleotides. In Pectobacterium atrosepticum (strain SCRI 1043 / ATCC BAA-672) (Erwinia carotovora subsp. atroseptica), this protein is Exodeoxyribonuclease 7 small subunit.